A 188-amino-acid polypeptide reads, in one-letter code: Adenine phosphoribosyltransferase (188 aa).

This sequence belongs to the purine/pyrimidine phosphoribosyltransferase family. As to quaternary structure, homodimer.

It is found in the cytoplasm. The catalysed reaction is AMP + diphosphate = 5-phospho-alpha-D-ribose 1-diphosphate + adenine. Its pathway is purine metabolism; AMP biosynthesis via salvage pathway; AMP from adenine: step 1/1. In terms of biological role, catalyzes a salvage reaction resulting in the formation of AMP, that is energically less costly than de novo synthesis. The protein is Adenine phosphoribosyltransferase of Neisseria meningitidis serogroup C (strain 053442).